A 982-amino-acid polypeptide reads, in one-letter code: Protein lin-10 (982 aa).

The segment covering 1–16 (MSSEAVAQATAATTSP) has biased composition (polar residues). Disordered regions lie at residues 1–55 (MSSE…MIPP), 119–228 (QPAL…RTDS), 269–327 (TVAD…STVP), 432–511 (FAQQ…GTDD), and 525–593 (QREQ…SKET). Positions 33-44 (KGGGAGGGGGGE) are enriched in gly residues. The span at 119 to 134 (QPALQQPRPSSQASSS) shows a compositional bias: low complexity. Polar residues-rich tracts occupy residues 143-156 (RQTA…NVSP) and 169-190 (ETSG…SSDV). Positions 211 to 228 (GEEKSEEKRKLSGDRTDS) are enriched in basic and acidic residues. Positions 301–318 (SLNQLRSSFNLPDDSTTV) are enriched in polar residues. Low complexity-rich tracts occupy residues 432–445 (FAQQ…APTP) and 454–464 (PSTSSGPSGAL). Over residues 490 to 501 (NGTSTSTTNGAQ) the composition is skewed to polar residues. Positions 539-550 (QEAATAAQEAAE) are enriched in low complexity. Basic and acidic residues predominate over residues 577-593 (GAERRGSVDKKKNSKET). The 185-residue stretch at 604–788 (GVLFRARYLG…VLNSQELLGD (185 aa)) folds into the PID domain. PDZ domains are found at residues 801 to 886 (EVVV…TVVS) and 892 to 968 (EVRI…MPTS).

In terms of assembly, interacts (via N-terminus) with egl-9 isoform e (via catalytic domain); the interaction regulates its trafficking; the interaction is direct. Interacts with rab-6.2 (in GTP-bound form). Post-translationally, phosphorylated on multiple Ser and Thr residues by cdk-5 which regulates its localization. In terms of processing, may be hydroxylated by egl-9 isoform e on multiple Pro residues which may prevent phosphorylation by cdk-5. In terms of tissue distribution, expressed in vulval epithelial cells and neurons.

It localises to the golgi apparatus. Its subcellular location is the golgi stack membrane. The protein resides in the trans-Golgi network membrane. It is found in the cytoplasm. The protein localises to the synapse. It localises to the perikaryon. Required specifically for the determination of 3 vulval precursor cell fates P5.p, P6.p and P7.p during late second and early third larval stages; required for basolateral localization of receptor tyrosine kinase let-23. Could have a general but redundant role in development, functioning in diverse cell lineages to control cell fates. Regulates the trafficking of the glr-1 subunit of AMPA-type glutamate receptors (AMPRs) in the ventral nerve cord. This may be partly through interacting with the small GTPase rab-6.2 in its active GTP-bound state. This chain is Protein lin-10, found in Caenorhabditis elegans.